The primary structure comprises 537 residues: Glucose-6-phosphate isomerase (537 aa).

The active-site Proton donor is the E355. Active-site residues include H386 and K501.

The protein belongs to the GPI family.

The protein localises to the cytoplasm. It catalyses the reaction alpha-D-glucose 6-phosphate = beta-D-fructose 6-phosphate. The protein operates within carbohydrate biosynthesis; gluconeogenesis. It participates in carbohydrate degradation; glycolysis; D-glyceraldehyde 3-phosphate and glycerone phosphate from D-glucose: step 2/4. Functionally, catalyzes the reversible isomerization of glucose-6-phosphate to fructose-6-phosphate. The chain is Glucose-6-phosphate isomerase from Protochlamydia amoebophila (strain UWE25).